The sequence spans 303 residues: Glycine--tRNA ligase alpha subunit (303 aa).

Belongs to the class-II aminoacyl-tRNA synthetase family. As to quaternary structure, tetramer of two alpha and two beta subunits.

Its subcellular location is the cytoplasm. It carries out the reaction tRNA(Gly) + glycine + ATP = glycyl-tRNA(Gly) + AMP + diphosphate. In Syntrophomonas wolfei subsp. wolfei (strain DSM 2245B / Goettingen), this protein is Glycine--tRNA ligase alpha subunit.